Here is a 512-residue protein sequence, read N- to C-terminus: Serine/threonine-protein kinase grp (512 aa).

The Protein kinase domain maps to 22–279; sequence WTLAQTLGEG…LEKTLDHKWC (258 aa). Residues 28–36 and Lys-51 each bind ATP; that span reads LGEGAYGEV. Residue Asp-143 is the Proton acceptor of the active site. Residues 335 to 360 form a disordered region; it reads PTMRSDDDFNVRLGSGRSKEDGGDRQ.

This sequence belongs to the protein kinase superfamily. CAMK Ser/Thr protein kinase family. NIM1 subfamily. In terms of processing, phosphorylated in a MEI-41/ATR dependent manner in response to DNA damage or the presence of unreplicated DNA.

The protein resides in the nucleus. The enzyme catalyses L-seryl-[protein] + ATP = O-phospho-L-seryl-[protein] + ADP + H(+). The catalysed reaction is L-threonyl-[protein] + ATP = O-phospho-L-threonyl-[protein] + ADP + H(+). Serine/threonine-protein kinase which is required for checkpoint-mediated cell cycle arrest and activation of DNA repair in response to the presence of DNA damage or unreplicated DNA. May also negatively regulate cell cycle progression during unperturbed cell cycles. May phosphorylate the CDC25 phosphatase stg, which promotes its degradation. This results in increased inhibitory tyrosine phosphorylation of Cdk1-cyclin complexes and consequent inhibition of cell cycle progression. This Drosophila melanogaster (Fruit fly) protein is Serine/threonine-protein kinase grp.